Consider the following 216-residue polypeptide: Probable transaldolase (216 aa).

Lysine 83 serves as the catalytic Schiff-base intermediate with substrate.

The protein belongs to the transaldolase family. Type 3B subfamily.

The protein localises to the cytoplasm. It catalyses the reaction D-sedoheptulose 7-phosphate + D-glyceraldehyde 3-phosphate = D-erythrose 4-phosphate + beta-D-fructose 6-phosphate. It functions in the pathway carbohydrate degradation; pentose phosphate pathway; D-glyceraldehyde 3-phosphate and beta-D-fructose 6-phosphate from D-ribose 5-phosphate and D-xylulose 5-phosphate (non-oxidative stage): step 2/3. Functionally, transaldolase is important for the balance of metabolites in the pentose-phosphate pathway. This Sorangium cellulosum (strain So ce56) (Polyangium cellulosum (strain So ce56)) protein is Probable transaldolase.